The chain runs to 481 residues: Proline--tRNA ligase (481 aa).

It belongs to the class-II aminoacyl-tRNA synthetase family. ProS type 3 subfamily. Homodimer.

It localises to the cytoplasm. It carries out the reaction tRNA(Pro) + L-proline + ATP = L-prolyl-tRNA(Pro) + AMP + diphosphate. In terms of biological role, catalyzes the attachment of proline to tRNA(Pro) in a two-step reaction: proline is first activated by ATP to form Pro-AMP and then transferred to the acceptor end of tRNA(Pro). This Saccharolobus islandicus (strain M.16.27) (Sulfolobus islandicus) protein is Proline--tRNA ligase.